A 246-amino-acid polypeptide reads, in one-letter code: Probable transcriptional regulatory protein APP7_1210 (246 aa).

It belongs to the TACO1 family.

It localises to the cytoplasm. This chain is Probable transcriptional regulatory protein APP7_1210, found in Actinobacillus pleuropneumoniae serotype 7 (strain AP76).